The sequence spans 350 residues: L-threonine 3-dehydrogenase (350 aa).

C42 contributes to the Zn(2+) binding site. Residues T44 and H47 each act as charge relay system in the active site. The Zn(2+) site is built by H67, E68, C97, C100, C103, and C111. Residues L179, E199, R204, 266 to 268 (LGL), and 291 to 292 (IT) each bind NAD(+).

This sequence belongs to the zinc-containing alcohol dehydrogenase family. Homotetramer. It depends on Zn(2+) as a cofactor.

It localises to the cytoplasm. It catalyses the reaction L-threonine + NAD(+) = (2S)-2-amino-3-oxobutanoate + NADH + H(+). It participates in amino-acid degradation; L-threonine degradation via oxydo-reductase pathway; glycine from L-threonine: step 1/2. In terms of biological role, catalyzes the NAD(+)-dependent oxidation of L-threonine to 2-amino-3-ketobutyrate. To a lesser extent, also catalyzes the oxidation of L-serine. The polypeptide is L-threonine 3-dehydrogenase (Thermococcus kodakarensis (strain ATCC BAA-918 / JCM 12380 / KOD1) (Pyrococcus kodakaraensis (strain KOD1))).